We begin with the raw amino-acid sequence, 581 residues long: Terpene synthase 2, chloroplastic (581 aa).

Residues 1-34 (MYSLPGATMSAAPASIISSSSFVEPLLLAAASPA) constitute a chloroplast transit peptide. Substrate is bound by residues Arg-299, Asp-336, Asp-340, and Arg-480. Mg(2+)-binding residues include Asp-336 and Asp-340. The short motif at 336–340 (DDIFD) is the DDXXD motif element. Mg(2+) is bound by residues Asp-483, Ser-487, and Glu-491.

The protein belongs to the terpene synthase family. Monomer. Requires Mg(2+) as cofactor.

It is found in the plastid. Its subcellular location is the chloroplast. It catalyses the reaction (2E,6E)-farnesyl diphosphate + H2O = (3S,6E)-nerolidol + diphosphate. The catalysed reaction is (2E,6E,10E)-geranylgeranyl diphosphate + H2O = (6E,10E)-geranyllinalool + diphosphate. It carries out the reaction (2E)-geranyl diphosphate + H2O = (S)-linalool + diphosphate. It functions in the pathway secondary metabolite biosynthesis; terpenoid biosynthesis. Its function is as follows. Involved in sesquiterpene (C15), diterpene (C20) and monoterpene (C10) biosynthesis. Has sesquiterpene synthase activity, converting farnesyl diphosphate to nerolidol, the precursor of the volatile C11-homoterpene (E)-3,8-dimethyl-1,4,7-nonatriene (DMNT). Has diterpene synthase activity, converting geranylgeranyl diphosphate to (E,E)-geranyllinalool, the precursor of the volatile C16-homoterpene (E,E)-4,8,12-trimethyltrideca 1,3,7,11-tetraene (TMTT). Has monoterpene synthase activity, converting geranyl diphosphate into linalool. Forms only the S-isomers of the three tertiary terpene alcohols. This Zea mays (Maize) protein is Terpene synthase 2, chloroplastic.